Consider the following 396-residue polypeptide: Cysteine protease ATG4A (396 aa).

The active-site Nucleophile is the cysteine 77. Active-site residues include aspartate 276 and histidine 278. The short motif at 390–393 (FEIL) is the LIR element.

The protein belongs to the peptidase C54 family. As to quaternary structure, interacts with ATG9A; the interaction is direct.

It localises to the cytoplasm. The catalysed reaction is [protein]-C-terminal L-amino acid-glycyl-phosphatidylethanolamide + H2O = [protein]-C-terminal L-amino acid-glycine + a 1,2-diacyl-sn-glycero-3-phosphoethanolamine. Inhibited by N-ethylmaleimide. Redox-regulated during autophagy since reducing conditions activate ATG4A whereas an oxidizing environment such as the presence of H(2)O(2) inhibits its activity. Cysteine protease that plays a key role in autophagy by mediating both proteolytic activation and delipidation of ATG8 family proteins. The protease activity is required for proteolytic activation of ATG8 family proteins: cleaves the C-terminal amino acid of ATG8 proteins to reveal a C-terminal glycine. Exposure of the glycine at the C-terminus is essential for ATG8 proteins conjugation to phosphatidylethanolamine (PE) and insertion to membranes, which is necessary for autophagy. Preferred substrate is GABARAPL2 followed by MAP1LC3A and GABARAP. Protease activity is also required to counteract formation of high-molecular weight conjugates of ATG8 proteins (ATG8ylation): acts as a deubiquitinating-like enzyme that removes ATG8 conjugated to other proteins, such as ATG3. In addition to the protease activity, also mediates delipidation of ATG8 family proteins. Catalyzes delipidation of PE-conjugated forms of ATG8 proteins during macroautophagy. Compared to ATG4B, the major protein for proteolytic activation of ATG8 proteins, shows weaker ability to cleave the C-terminal amino acid of ATG8 proteins, while it displays stronger delipidation activity. Involved in phagophore growth during mitophagy independently of its protease activity and of ATG8 proteins: acts by regulating ATG9A trafficking to mitochondria and promoting phagophore-endoplasmic reticulum contacts during the lipid transfer phase of mitophagy. This is Cysteine protease ATG4A from Mus musculus (Mouse).